The following is a 288-amino-acid chain: Serine/threonine-protein phosphatase PGAM5, mitochondrial (288 aa).

The Mitochondrial matrix portion of the chain corresponds to 1–6 (MAFRQA). The chain crosses the membrane as a helical span at residues 7–29 (LQLAACGLAGGSAAVLFSAVAVG). Residues 30–288 (KPRAGGDADT…FMPPDKITRS (259 aa)) lie on the Mitochondrial intermembrane side of the membrane. Residues 76-81 (NVEFGE) are interaction with KEAP1. Ser86 is modified (phosphoserine). Residues Lys115, Lys143, and Lys190 each carry the N6-acetyllysine modification.

This sequence belongs to the phosphoglycerate mutase family. BPG-dependent PGAM subfamily. Dimer. Forms a ternary complex with NFE2L2 and KEAP1. Interacts with BCL2L1 and MAP3K5. Upon TNF-induced necrosis, forms in complex with RIPK1, RIPK3 and MLKL; the formation of this complex leads to PGAM5 phosphorylation. Isoform 2, but not isoform 1, interacts with DNM1L; this interaction leads to DNM1L dephosphorylation and activation and eventually to mitochondria fragmentation. In terms of processing, phosphorylated by the RIPK1/RIPK3 complex under necrotic conditions. This phosphorylation increases PGAM5 phosphatase activity. Proteolytically cleaved by PARL in response to loss of mitochondrial membrane potential.

It is found in the mitochondrion outer membrane. The protein localises to the mitochondrion inner membrane. It carries out the reaction O-phospho-L-seryl-[protein] + H2O = L-seryl-[protein] + phosphate. It catalyses the reaction O-phospho-L-threonyl-[protein] + H2O = L-threonyl-[protein] + phosphate. Mitochondrial serine/threonine phosphatase that dephosphorylates various substrates and thus plays a role in different biological processes including cellular senescence or mitophagy. Modulates cellular senescence by regulating mitochondrial dynamics. Mechanistically, participates in mitochondrial fission through dephosphorylating DNM1L/DRP1. Additionally, dephosphorylates MFN2 in a stress-sensitive manner and consequently protects it from ubiquitination and degradation to promote mitochondrial network formation. Regulates mitophagy independent of PARKIN by interacting with and dephosphorylating FUNDC1, which interacts with LC3. Regulates anti-oxidative response by forming a tertiary complex with KEAP1 and NRF2. Regulates necroptosis by acting as a RIPK3 target and recruiting the RIPK1-RIPK3-MLKL necrosis 'attack' complex to mitochondria. In Rattus norvegicus (Rat), this protein is Serine/threonine-protein phosphatase PGAM5, mitochondrial (Pgam5).